The primary structure comprises 545 residues: Vicilin Pis v 3.0101 (545 aa).

An N-terminal signal peptide occupies residues 1-25; that stretch reads MGSRTKFCLTLFLVSVLILCAGLAL. Disordered stretches follow at residues 62 to 93 and 129 to 154; these read KEKKGREQEEEEEEEWGSGRGRGDEFSTHEPG and REHSYSRDEEEEEEGDEEQEEEDENP. A compositionally biased stretch (basic and acidic residues) spans 82–93; sequence GRGDEFSTHEPG. Residues 136–153 show a composition bias toward acidic residues; it reads DEEEEEEGDEEQEEEDEN. Residues 354-517 form the Cupin type-1 2 domain; the sequence is TFNLFKKDPS…LAFKTKGEEV (164 aa).

It belongs to the 7S seed storage protein family. In terms of tissue distribution, expressed in seed.

Its function is as follows. Seed storage protein. The sequence is that of Vicilin Pis v 3.0101 from Pistacia vera (Pistachio).